The primary structure comprises 65 residues: Large ribosomal subunit protein bL35 (65 aa).

The disordered stretch occupies residues 1 to 30 (MPKMKTVSGAAKRFKKTGSGRFKSKQSHLR). The segment covering 12–30 (KRFKKTGSGRFKSKQSHLR) has biased composition (basic residues).

Belongs to the bacterial ribosomal protein bL35 family.

The polypeptide is Large ribosomal subunit protein bL35 (Alteromonas mediterranea (strain DSM 17117 / CIP 110805 / LMG 28347 / Deep ecotype)).